We begin with the raw amino-acid sequence, 1190 residues long: Plakophilin-4 (1190 aa).

The disordered stretch occupies residues Met1–Thr32. A coiled-coil region spans residues Thr36–Ala63. Residues Ala73–Gln347 are disordered. Ser75 carries the phosphoserine modification. Residues Ser77 to Lys86 show a composition bias toward polar residues. Thr84 bears the Phosphothreonine mark. Ser106, Ser132, Ser136, and Ser139 each carry phosphoserine. Composition is skewed to polar residues over residues Gly138 to Gly156, Phe163 to Val203, and Ser213 to Val229. 3 positions are modified to phosphoserine: Ser220, Ser230, and Ser235. Positions Ser230 to Gly241 are enriched in low complexity. The span at Pro247–Pro266 shows a compositional bias: polar residues. 2 positions are modified to omega-N-methylarginine: Arg253 and Arg269. Phosphoserine is present on residues Ser272, Ser280, Ser313, Ser326, and Ser336. Residues Ser289–Arg323 show a composition bias toward polar residues. Positions Val324–Pro337 are enriched in low complexity. Position 371 is a phosphotyrosine (Tyr371). Residues Ser391, Ser402, and Ser405 each carry the phosphoserine modification. Thr411 is modified (phosphothreonine). Tyr414 bears the Phosphotyrosine mark. Phosphoserine is present on residues Ser421, Ser426, and Ser437. At Tyr477 the chain carries Phosphotyrosine. 3 positions are modified to phosphoserine: Ser509, Ser511, and Ser514. ARM repeat units lie at residues Lys517 to Phe556, Asn559 to Phe598, and Asp603 to Ser643. The segment covering Gly772 to Glu781 has biased composition (basic and acidic residues). The disordered stretch occupies residues Gly772 to Gly809. Position 775 is a phosphoserine (Ser775). Residues Ala861–Leu900 form an ARM 4 repeat. Phosphothreonine is present on residues Thr1012 and Thr1016. 4 positions are modified to phosphoserine: Ser1044, Ser1090, Ser1099, and Ser1133.

Belongs to the beta-catenin family. In terms of assembly, interacts (via the C-terminus) with FRMPD2 (via the PDZ 2 domain). Interacts with PDZD2. Interacts with RHOA; the interaction is detected at the midbody. Interacts with ECT2; the interaction is detected at the midbody. Interacts with CCDC85B.

It is found in the cell junction. The protein localises to the desmosome. Its subcellular location is the cytoplasm. It localises to the cytoskeleton. The protein resides in the spindle. It is found in the spindle pole. The protein localises to the midbody. Its subcellular location is the cell membrane. Its function is as follows. Plays a role as a regulator of Rho activity during cytokinesis. May play a role in junctional plaques. The polypeptide is Plakophilin-4 (Pkp4) (Mus musculus (Mouse)).